A 908-amino-acid polypeptide reads, in one-letter code: Autophagy-related protein 9 (908 aa).

The Cytoplasmic segment spans residues 1-216 (MADGVIARLM…SGMWCIVVER (216 aa)). A disordered region spans residues 64–162 (SRATVDGRIP…IDQELQPPLH (99 aa)). Residues 217-237 (VLHLIKVAFVAFLLTFLSQCV) form a helical membrane-spanning segment. Topologically, residues 238–259 (DFKKIPSNQKLSQVLVPQCTRN) are lumenal. Asn-259 carries an N-linked (GlcNAc...) asparagine glycan. The helical transmembrane segment at 260-280 (MSGLWNIGLWLFAFYFMWKSI) threads the bilayer. The Cytoplasmic segment spans residues 281–433 (QYILDLRRLT…GILSAKLRSR (153 aa)). An intramembrane segment occupies 434–454 (FIFAGVMILILSPFVAGYLII). Residues 455 to 525 (VYFLEYYNEI…KTSMVAKTVS (71 aa)) are Cytoplasmic-facing. Residues 526-546 (FIAGSIATVLALISVFDPEMF) traverse the membrane as a helical segment. Residues 547–555 (LGFEITHDR) are Lumenal-facing. A helical transmembrane segment spans residues 556–576 (TVLFYTAVFGAIWSVARGSVS). Over 577–622 (EDNAVFDPEYALGNVVEYTHYQPEHWKDRWHSADVKAEFEELYKLK) the chain is Cytoplasmic. The stretch at 623–643 (LVIFIEEILSILTTPFVLFFS) is an intramembrane region. Residues 644 to 908 (LPKSADQIID…HLNRRLGGVR (265 aa)) lie on the Cytoplasmic side of the membrane. Disordered regions lie at residues 751-779 (AASR…AVMA) and 809-878 (QFRG…DSVV). Residues 813–825 (GNQGDGHMMGGGS) are compositionally biased toward gly residues. Over residues 839–852 (QTHDDESEDSRAGL) the composition is skewed to basic and acidic residues.

It belongs to the ATG9 family. As to quaternary structure, homotrimer; forms a homotrimer with a central pore that forms a path between the two membrane leaflets. Post-translationally, phosphorylated by apg-1. Apg-1 phosphorylation is required for preautophagosome elongation.

The protein resides in the preautophagosomal structure membrane. Its subcellular location is the cytoplasmic vesicle membrane. The protein localises to the golgi apparatus membrane. It is found in the endoplasmic reticulum membrane. It carries out the reaction a 1,2-diacyl-sn-glycero-3-phosphocholine(in) = a 1,2-diacyl-sn-glycero-3-phosphocholine(out). The catalysed reaction is a 1,2-diacyl-sn-glycero-3-phospho-L-serine(in) = a 1,2-diacyl-sn-glycero-3-phospho-L-serine(out). It catalyses the reaction a 1,2-diacyl-sn-glycero-3-phosphoethanolamine(in) = a 1,2-diacyl-sn-glycero-3-phosphoethanolamine(out). The enzyme catalyses a 1,2-diacyl-sn-glycero-3-phospho-(1D-myo-inositol-3-phosphate)(in) = a 1,2-diacyl-sn-glycero-3-phospho-(1D-myo-inositol-3-phosphate)(out). Phospholipid scramblase involved in autophagy and cytoplasm to vacuole transport (Cvt) vesicle formation. Cycles between the preautophagosomal structure/phagophore assembly site (PAS) and the cytoplasmic vesicle pool and supplies membrane for the growing autophagosome. Lipid scramblase activity plays a key role in preautophagosomal structure/phagophore assembly by distributing the phospholipids that arrive through atg-2 from the cytoplasmic to the luminal leaflet of the bilayer, thereby driving autophagosomal membrane expansion. Required for mitophagy. Also involved in endoplasmic reticulum-specific autophagic process and is essential for the survival of cells subjected to severe ER stress. Different machineries are required for anterograde trafficking to the PAS during either the Cvt pathway or bulk autophagy and for retrograde trafficking. In Neurospora crassa (strain ATCC 24698 / 74-OR23-1A / CBS 708.71 / DSM 1257 / FGSC 987), this protein is Autophagy-related protein 9 (apg-7).